Here is a 520-residue protein sequence, read N- to C-terminus: N-acetylgalactosamine-6-sulfatase (520 aa).

Residues 1 to 23 (MAACTAAQQLLLVLSALGLLAAG) form the signal peptide. Residues 24–377 (APQPPNIVLL…PTMLKGQMMD (354 aa)) form a catalytic domain region. 3 residues coordinate Ca(2+): Asp-36, Asp-37, and Cys-76. Cys-76 (nucleophile) is an active-site residue. Cys-76 bears the 3-oxoalanine (Cys) mark. His-139 is an active-site residue. Residue Asn-201 is glycosylated (N-linked (GlcNAc...) asparagine). Residues Asp-286 and Asn-287 each contribute to the Ca(2+) site. The cysteines at positions 306 and 417 are disulfide-linked. Asn-421 carries N-linked (GlcNAc...) asparagine glycosylation. Disulfide bonds link Cys-487–Cys-516 and Cys-499–Cys-505.

The protein belongs to the sulfatase family. Homodimer. Ca(2+) serves as cofactor. Post-translationally, the conversion to 3-oxoalanine (also known as C-formylglycine, FGly), of a serine or cysteine residue in prokaryotes and of a cysteine residue in eukaryotes, is critical for catalytic activity. Widely expressed. Higher expression in liver and kidney.

Its subcellular location is the lysosome. It carries out the reaction Hydrolysis of the 6-sulfate groups of the N-acetyl-D-galactosamine 6-sulfate units of chondroitin sulfate and of the D-galactose 6-sulfate units of keratan sulfate.. The protein is N-acetylgalactosamine-6-sulfatase (Galns) of Mus musculus (Mouse).